The following is a 659-amino-acid chain: Cysteine-rich receptor-like protein kinase 5 (659 aa).

A signal peptide spans Met-1–Ala-24. Residues Gln-25–Thr-279 lie on the Extracellular side of the membrane. Gnk2-homologous domains lie at Asp-28–Ile-132 and Thr-138–Phe-243. N-linked (GlcNAc...) asparagine glycosylation is found at Asn-175 and Asn-277. A helical transmembrane segment spans residues Val-280–Phe-300. The Cytoplasmic portion of the chain corresponds to Ser-301–Arg-659. In terms of domain architecture, Protein kinase spans Phe-340 to Leu-619. ATP is bound by residues Leu-346–Val-354 and Lys-368. Tyr-413 bears the Phosphotyrosine mark. The active-site Proton acceptor is the Asp-465. At Thr-505 the chain carries Phosphothreonine. Tyr-513 is subject to Phosphotyrosine.

Belongs to the protein kinase superfamily. Ser/Thr protein kinase family. CRK subfamily. Interacts with CRKIP1 (KAPP), CRKIP2 and CRKIP3, three kinase-associated type 2C proteins.

The protein resides in the membrane. It catalyses the reaction L-seryl-[protein] + ATP = O-phospho-L-seryl-[protein] + ADP + H(+). The enzyme catalyses L-threonyl-[protein] + ATP = O-phospho-L-threonyl-[protein] + ADP + H(+). Involved in multiple distinct defense responses. May function as a disease resistance (R) protein. In Arabidopsis thaliana (Mouse-ear cress), this protein is Cysteine-rich receptor-like protein kinase 5 (CRK5).